The primary structure comprises 186 residues: Bilin biosynthesis protein CpeZ (186 aa).

In terms of biological role, involved in the biosynthesis of bilin. The protein is Bilin biosynthesis protein CpeZ (cpeZ) of Synechococcus sp. (strain WH8020).